Consider the following 210-residue polypeptide: Mitochondrial cardiolipin hydrolase (210 aa).

Residues 1–6 (MLLWGR) lie on the Mitochondrial intermembrane side of the membrane. A helical transmembrane segment spans residues 7–24 (WKVVAGLAGLALSLELLL). The Cytoplasmic portion of the chain corresponds to 25–210 (RYMRRRKPIR…YDFFPEKENK (186 aa)). Residues 138 to 165 (SSGYMHHKFAVVDGTVVLTGSLNWTVQA) enclose the PLD phosphodiesterase domain. Active-site residues include histidine 143, lysine 145, and aspartate 150.

The protein belongs to the phospholipase D family. MitoPLD/Zucchini subfamily. Homodimer.

It is found in the mitochondrion outer membrane. The enzyme catalyses a cardiolipin + H2O = a 1,2-diacyl-sn-glycero-3-phospho-(1'-sn-glycerol) + a 1,2-diacyl-sn-glycero-3-phosphate + H(+). Functionally, presents phospholipase and nuclease activities, depending on the different physiological conditions. Plays a key role in mitochondrial fusion and fission via its phospholipase activity. In its phospholipase role, it uses the mitochondrial lipid cardiolipin as substrate to generate phosphatidate (PA or 1,2-diacyl-sn-glycero-3-phosphate), a second messenger signaling lipid. Production of PA facilitates Mitofusin-mediated fusion, whereas the cleavage of PA by the Lipin family of phosphatases produces diacylgycerol (DAG) which promotes mitochondrial fission. Regulates mitochondrial shape through facilitating mitochondrial fusion. During spermatogenesis, plays a critical role in PIWI-interacting RNA (piRNA) biogenesis. piRNAs provide essential protection against the activity of mobile genetic elements. piRNA-mediated transposon silencing is thus critical for maintaining genome stability, in particular in germline cells when transposons are mobilized as a consequence of wide-spread genomic demethylation. Has been shown to be a backbone-non-specific, single strand-specific nuclease, cleaving either RNA or DNA substrates with similar affinity. Produces 5' phosphate and 3' hydroxyl termini, suggesting it could directly participate in the processing of primary piRNA transcripts. Has been proposed to act as a cardiolipin hydrolase to generate phosphatidic acid at mitochondrial surface. Although it cannot be excluded that it can act as a phospholipase in some circumstances, this activity could not be confirmed. In Xenopus tropicalis (Western clawed frog), this protein is Mitochondrial cardiolipin hydrolase (pld6).